The chain runs to 90 residues: Cyclin-dependent kinases regulatory subunit 1 (90 aa).

Belongs to the CKS family.

Its function is as follows. Binds to the catalytic subunit of the cyclin dependent kinases and is essential for their biological function. The protein is Cyclin-dependent kinases regulatory subunit 1 (CKS1) of Oryza sativa subsp. indica (Rice).